Reading from the N-terminus, the 87-residue chain is NADH-ubiquinone oxidoreductase chain 4L (87 aa).

Transmembrane regions (helical) follow at residues 1 to 21 (MNLS…NRKN), 22 to 42 (IILM…LVLI), and 57 to 77 (LYII…LVAF).

Belongs to the complex I subunit 4L family. In terms of assembly, core subunit of respiratory chain NADH dehydrogenase (Complex I) which is composed of 45 different subunits.

The protein localises to the mitochondrion inner membrane. The catalysed reaction is a ubiquinone + NADH + 5 H(+)(in) = a ubiquinol + NAD(+) + 4 H(+)(out). Core subunit of the mitochondrial membrane respiratory chain NADH dehydrogenase (Complex I) which catalyzes electron transfer from NADH through the respiratory chain, using ubiquinone as an electron acceptor. In Moniliophthora perniciosa (strain FA553 / isolate CP02) (Witches'-broom disease fungus), this protein is NADH-ubiquinone oxidoreductase chain 4L (ND4L).